Reading from the N-terminus, the 577-residue chain is Arginine--tRNA ligase (577 aa).

The 'HIGH' region motif lies at 122–132 (PNVAKEMHVGH).

It belongs to the class-I aminoacyl-tRNA synthetase family. In terms of assembly, monomer.

The protein localises to the cytoplasm. It carries out the reaction tRNA(Arg) + L-arginine + ATP = L-arginyl-tRNA(Arg) + AMP + diphosphate. This is Arginine--tRNA ligase from Vibrio vulnificus (strain YJ016).